The following is a 343-amino-acid chain: MEFLLDLHPDAYPLEGFRRRQLLEWVFVQGVGTFDAMTNLPAEARAELARSYHLNPFREIETVRSADGSVKYLFTLTDGRQMEAVYMPYLDRKTICVSTMVGCPARCAFCATGAMGFGRNLTPGEIVAQVLAVAGGEGIGPREIRNLVFMGMGEAMLNYENTMQAARILLHPQALGMSKRRVTLSTVGIAKGIRQLAAEDDLGIKLAISLHAPDEDTRQRIIPTGAANSIAEIMAAARDYQAVTGRRITLEYTMLRGINDHLWQAELLADVLQGLVSHVNLIPMNPWDGSGFESSTEDQIQAFYDTLEARGVDVSVRRSRGKDAGAACGQLALKRPGAVTGAA.

E83 (proton acceptor) is an active-site residue. The Radical SAM core domain occupies 89–323; that stretch reads YLDRKTICVS…VSVRRSRGKD (235 aa). C96 and C328 are disulfide-bonded. [4Fe-4S] cluster is bound by residues C103, C107, and C110. S-adenosyl-L-methionine-binding positions include 153-154, S185, 209-211, and N285; these read GE and SLH. Residue C328 is the S-methylcysteine intermediate of the active site.

The protein belongs to the radical SAM superfamily. RlmN family. [4Fe-4S] cluster serves as cofactor.

The protein resides in the cytoplasm. The enzyme catalyses adenosine(2503) in 23S rRNA + 2 reduced [2Fe-2S]-[ferredoxin] + 2 S-adenosyl-L-methionine = 2-methyladenosine(2503) in 23S rRNA + 5'-deoxyadenosine + L-methionine + 2 oxidized [2Fe-2S]-[ferredoxin] + S-adenosyl-L-homocysteine. It carries out the reaction adenosine(37) in tRNA + 2 reduced [2Fe-2S]-[ferredoxin] + 2 S-adenosyl-L-methionine = 2-methyladenosine(37) in tRNA + 5'-deoxyadenosine + L-methionine + 2 oxidized [2Fe-2S]-[ferredoxin] + S-adenosyl-L-homocysteine. Its function is as follows. Specifically methylates position 2 of adenine 2503 in 23S rRNA and position 2 of adenine 37 in tRNAs. In Deinococcus deserti (strain DSM 17065 / CIP 109153 / LMG 22923 / VCD115), this protein is Probable dual-specificity RNA methyltransferase RlmN.